The primary structure comprises 163 residues: MLCPSCNSESSRVVDSRSIEMGVSIRRRRECSECQTRFTTIERSVLLVVKRNGVTEEFSREKVIKGVRRACQGRDVSDDALKRLAHEVEQAVRVAHGSQVPANQIGLAILDPLRTLDEVAYLRFASVYKSFNCAEDFEQEIESLRAHRQALAAPPVGDNSEDN.

The segment at 3-34 (CPSCNSESSRVVDSRSIEMGVSIRRRRECSEC) is a zinc-finger region. The ATP-cone domain maps to 46-136 (LLVVKRNGVT…VYKSFNCAED (91 aa)).

Belongs to the NrdR family. It depends on Zn(2+) as a cofactor.

Negatively regulates transcription of bacterial ribonucleotide reductase nrd genes and operons by binding to NrdR-boxes. This Corynebacterium jeikeium (strain K411) protein is Transcriptional repressor NrdR.